The sequence spans 449 residues: 3-phosphoshikimate 1-carboxyvinyltransferase (449 aa).

The interval 1–29 (MSHDSVPSPITARAGTPLRGRLRPPGDKS) is disordered. 3-phosphoshikimate is bound by residues K28, S29, and R33. K28 is a phosphoenolpyruvate binding site. Positions 101 and 129 each coordinate phosphoenolpyruvate. 3-phosphoshikimate contacts are provided by S175, Q177, D330, and K357. Phosphoenolpyruvate is bound at residue Q177. The Proton acceptor role is filled by D330. The phosphoenolpyruvate site is built by R361 and R405.

This sequence belongs to the EPSP synthase family. As to quaternary structure, monomer.

The protein localises to the cytoplasm. The catalysed reaction is 3-phosphoshikimate + phosphoenolpyruvate = 5-O-(1-carboxyvinyl)-3-phosphoshikimate + phosphate. The protein operates within metabolic intermediate biosynthesis; chorismate biosynthesis; chorismate from D-erythrose 4-phosphate and phosphoenolpyruvate: step 6/7. In terms of biological role, catalyzes the transfer of the enolpyruvyl moiety of phosphoenolpyruvate (PEP) to the 5-hydroxyl of shikimate-3-phosphate (S3P) to produce enolpyruvyl shikimate-3-phosphate and inorganic phosphate. In Methylobacterium sp. (strain 4-46), this protein is 3-phosphoshikimate 1-carboxyvinyltransferase.